The sequence spans 316 residues: 4-diphosphocytidyl-2-C-methyl-D-erythritol kinase (316 aa).

K32 is a catalytic residue. ATP is bound at residue 126 to 136 (PVGAGLGGGSA). D168 is a catalytic residue.

The protein belongs to the GHMP kinase family. IspE subfamily.

The catalysed reaction is 4-CDP-2-C-methyl-D-erythritol + ATP = 4-CDP-2-C-methyl-D-erythritol 2-phosphate + ADP + H(+). It participates in isoprenoid biosynthesis; isopentenyl diphosphate biosynthesis via DXP pathway; isopentenyl diphosphate from 1-deoxy-D-xylulose 5-phosphate: step 3/6. Functionally, catalyzes the phosphorylation of the position 2 hydroxy group of 4-diphosphocytidyl-2C-methyl-D-erythritol. The sequence is that of 4-diphosphocytidyl-2-C-methyl-D-erythritol kinase from Bifidobacterium longum subsp. infantis (strain ATCC 15697 / DSM 20088 / JCM 1222 / NCTC 11817 / S12).